Consider the following 554-residue polypeptide: Glutamine--tRNA ligase (554 aa).

The short motif at 34–44 (PEPNGYLHIGH) is the 'HIGH' region element. ATP contacts are provided by residues 35 to 37 (EPN) and 41 to 47 (HIGHAKS). Residues Asp-67 and Tyr-212 each contribute to the L-glutamine site. ATP contacts are provided by residues Thr-231, 261–262 (RL), and 269–271 (MSK). The 'KMSKS' region signature appears at 268–272 (VMSKR). Residues 317 to 324 (TKQDNTIE) are interaction with tRNA.

Belongs to the class-I aminoacyl-tRNA synthetase family. As to quaternary structure, monomer.

The protein resides in the cytoplasm. The catalysed reaction is tRNA(Gln) + L-glutamine + ATP = L-glutaminyl-tRNA(Gln) + AMP + diphosphate. The sequence is that of Glutamine--tRNA ligase from Shigella flexneri serotype 5b (strain 8401).